The chain runs to 131 residues: Small ribosomal subunit protein uS9c (131 aa).

It belongs to the universal ribosomal protein uS9 family.

It localises to the plastid. The protein localises to the chloroplast. This chain is Small ribosomal subunit protein uS9c (rps9), found in Emiliania huxleyi (Coccolithophore).